The sequence spans 224 residues: Pyridoxal 5'-phosphate synthase subunit SNO1 (224 aa).

L-glutamine is bound at residue 67 to 69; that stretch reads GES. Cys-100 serves as the catalytic Nucleophile. Residues Arg-129 and 160–161 contribute to the L-glutamine site; that span reads IR. Active-site charge relay system residues include His-203 and Glu-205.

It belongs to the glutaminase PdxT/SNO family.

The enzyme catalyses aldehydo-D-ribose 5-phosphate + D-glyceraldehyde 3-phosphate + L-glutamine = pyridoxal 5'-phosphate + L-glutamate + phosphate + 3 H2O + H(+). It carries out the reaction L-glutamine + H2O = L-glutamate + NH4(+). It functions in the pathway cofactor biosynthesis; pyridoxal 5'-phosphate biosynthesis. In terms of biological role, catalyzes the hydrolysis of glutamine to glutamate and ammonia as part of the biosynthesis of pyridoxal 5'-phosphate. The resulting ammonia molecule is channeled to the active site of a SNZ isoform. The protein is Pyridoxal 5'-phosphate synthase subunit SNO1 (SNO1) of Saccharomyces cerevisiae (strain ATCC 204508 / S288c) (Baker's yeast).